The following is a 1154-amino-acid chain: Chromosome partition protein Smc (1154 aa).

An ATP-binding site is contributed by 32 to 39 (PNGCGKSN). 3 coiled-coil regions span residues 170–215 (VAGL…ARQA), 282–505 (LREA…LNGE), and 627–993 (AARR…EARE).

Belongs to the SMC family. Homodimer.

The protein localises to the cytoplasm. Required for chromosome condensation and partitioning. The chain is Chromosome partition protein Smc from Rhodopseudomonas palustris (strain ATCC BAA-98 / CGA009).